The primary structure comprises 347 residues: tRNA N6-adenosine threonylcarbamoyltransferase (347 aa).

Fe cation is bound by residues histidine 113 and histidine 117. Substrate contacts are provided by residues 136-140 (LVSGG), aspartate 170, glycine 183, aspartate 187, and asparagine 282. Aspartate 310 contributes to the Fe cation binding site.

It belongs to the KAE1 / TsaD family. Fe(2+) is required as a cofactor.

It is found in the cytoplasm. The enzyme catalyses L-threonylcarbamoyladenylate + adenosine(37) in tRNA = N(6)-L-threonylcarbamoyladenosine(37) in tRNA + AMP + H(+). Its function is as follows. Required for the formation of a threonylcarbamoyl group on adenosine at position 37 (t(6)A37) in tRNAs that read codons beginning with adenine. Is involved in the transfer of the threonylcarbamoyl moiety of threonylcarbamoyl-AMP (TC-AMP) to the N6 group of A37, together with TsaE and TsaB. TsaD likely plays a direct catalytic role in this reaction. The chain is tRNA N6-adenosine threonylcarbamoyltransferase from Cutibacterium acnes (strain DSM 16379 / KPA171202) (Propionibacterium acnes).